Here is a 494-residue protein sequence, read N- to C-terminus: Histidine--tRNA ligase (494 aa).

It belongs to the class-II aminoacyl-tRNA synthetase family. As to quaternary structure, homodimer.

It is found in the cytoplasm. It carries out the reaction tRNA(His) + L-histidine + ATP = L-histidyl-tRNA(His) + AMP + diphosphate + H(+). In Cereibacter sphaeroides (strain ATCC 17023 / DSM 158 / JCM 6121 / CCUG 31486 / LMG 2827 / NBRC 12203 / NCIMB 8253 / ATH 2.4.1.) (Rhodobacter sphaeroides), this protein is Histidine--tRNA ligase.